The following is a 156-amino-acid chain: MAKTFKFIFYFWGAFVLVFALDQWVKSLTLAGLRWQSEYLDLTYALNTGVAFSMLSFLEHNLKYLHLALIVVLFIYLFWQKTLLKTHSIAFGMMLGAGVSNLLDRFIHGGVVDMFFWHKWFNFAIFNVADVMINISVALILIQEIFKKRKKDDRMD.

Transmembrane regions (helical) follow at residues 5 to 25 (FKFI…DQWV), 64 to 84 (YLHL…KTLL), and 89 to 109 (IAFG…FIHG). Catalysis depends on residues Asp113 and Asp130. A helical membrane pass occupies residues 122–142 (NFAIFNVADVMINISVALILI).

Belongs to the peptidase A8 family.

Its subcellular location is the cell inner membrane. The enzyme catalyses Release of signal peptides from bacterial membrane prolipoproteins. Hydrolyzes -Xaa-Yaa-Zaa-|-(S,diacylglyceryl)Cys-, in which Xaa is hydrophobic (preferably Leu), and Yaa (Ala or Ser) and Zaa (Gly or Ala) have small, neutral side chains.. Its pathway is protein modification; lipoprotein biosynthesis (signal peptide cleavage). Its function is as follows. This protein specifically catalyzes the removal of signal peptides from prolipoproteins. This Campylobacter jejuni subsp. jejuni serotype O:23/36 (strain 81-176) protein is Lipoprotein signal peptidase.